Here is a 415-residue protein sequence, read N- to C-terminus: Putative glutamate--cysteine ligase 2 (415 aa).

It belongs to the glutamate--cysteine ligase type 2 family. YbdK subfamily.

The catalysed reaction is L-cysteine + L-glutamate + ATP = gamma-L-glutamyl-L-cysteine + ADP + phosphate + H(+). ATP-dependent carboxylate-amine ligase which exhibits weak glutamate--cysteine ligase activity. The sequence is that of Putative glutamate--cysteine ligase 2 from Bordetella petrii (strain ATCC BAA-461 / DSM 12804 / CCUG 43448).